A 199-amino-acid chain; its full sequence is MSEPLQELGNYIATKRADCVLAWDVTNKELNLDVTPSNIVGLVEFLKTDATCRFSTLIDITAVDYTGRAKRYDVVYHLLSMYQNHRVRLRVSIREDQMMPSVISVHPSANWFEREVFDMFGILFSGHPDLRRILTDYGFRGHPLRKDFPTTGYTEVRYDEAQKRVVYEPVSLVQEYRQFDFMSPWEGAEYILPGDEKKE.

Belongs to the complex I 30 kDa subunit family. As to quaternary structure, NDH-1 is composed of 14 different subunits. Subunits NuoB, C, D, E, F, and G constitute the peripheral sector of the complex.

It is found in the cell inner membrane. The enzyme catalyses a quinone + NADH + 5 H(+)(in) = a quinol + NAD(+) + 4 H(+)(out). In terms of biological role, NDH-1 shuttles electrons from NADH, via FMN and iron-sulfur (Fe-S) centers, to quinones in the respiratory chain. The immediate electron acceptor for the enzyme in this species is believed to be ubiquinone. Couples the redox reaction to proton translocation (for every two electrons transferred, four hydrogen ions are translocated across the cytoplasmic membrane), and thus conserves the redox energy in a proton gradient. The sequence is that of NADH-quinone oxidoreductase subunit C from Roseobacter denitrificans (strain ATCC 33942 / OCh 114) (Erythrobacter sp. (strain OCh 114)).